Reading from the N-terminus, the 397-residue chain is MKLTTFAPEFAEALPILEQIEAAGFEAYFVGGSVRDNLLGLPIHDVDIATSAYPAEIKQIFKRTVDTGIQHGTVMILDHGNGYEVTTFRTETGYQDFRRPDSVTFVRSLEEDLKRRDFTINALAMRADGEIIDLFDGIADLKAHKIRAVGVADERFHEDALRMMRAVRFESQLGFSVTETTQAAIEKHAALLEKIAIERIHVEFMKLMQGIERQNGLRTFIDTGLYRYCPDLADQLLALERLTALPTEQLHDESAVWLVVTYLLGQTPAQAGRFLKHWKSANDVIDAVKAGLVLLPKLLTATADQWDLYQAGQAVLVISLQIAQMVTTATIPTADWLERYDRLQIKQKADLAINGQILMQNGFQPGPILGKALAILERKVVLDELPNTTEALLKAAK.

Positions 32 and 35 each coordinate ATP. CTP-binding residues include glycine 32 and arginine 35. 2 residues coordinate Mg(2+): aspartate 45 and aspartate 47. ATP-binding residues include arginine 116, aspartate 159, arginine 162, arginine 165, and arginine 168. CTP is bound by residues arginine 116, aspartate 159, arginine 162, arginine 165, and arginine 168.

It belongs to the tRNA nucleotidyltransferase/poly(A) polymerase family. Bacterial CCA-adding enzyme type 3 subfamily. As to quaternary structure, homodimer. Mg(2+) serves as cofactor.

The catalysed reaction is a tRNA precursor + 2 CTP + ATP = a tRNA with a 3' CCA end + 3 diphosphate. The enzyme catalyses a tRNA with a 3' CCA end + 2 CTP + ATP = a tRNA with a 3' CCACCA end + 3 diphosphate. Catalyzes the addition and repair of the essential 3'-terminal CCA sequence in tRNAs without using a nucleic acid template. Adds these three nucleotides in the order of C, C, and A to the tRNA nucleotide-73, using CTP and ATP as substrates and producing inorganic pyrophosphate. tRNA 3'-terminal CCA addition is required both for tRNA processing and repair. Also involved in tRNA surveillance by mediating tandem CCA addition to generate a CCACCA at the 3' terminus of unstable tRNAs. While stable tRNAs receive only 3'-terminal CCA, unstable tRNAs are marked with CCACCA and rapidly degraded. The protein is CCA-adding enzyme of Latilactobacillus sakei subsp. sakei (strain 23K) (Lactobacillus sakei subsp. sakei).